Here is a 176-residue protein sequence, read N- to C-terminus: Large ribosomal subunit protein eL6A (176 aa).

Position 2 is an N-acetylserine (S2). Phosphoserine is present on S12. K128 participates in a covalent cross-link: Glycyl lysine isopeptide (Lys-Gly) (interchain with G-Cter in ubiquitin).

Belongs to the eukaryotic ribosomal protein eL6 family. In terms of assembly, component of the large ribosomal subunit (LSU). Mature yeast ribosomes consist of a small (40S) and a large (60S) subunit. The 40S small subunit contains 1 molecule of ribosomal RNA (18S rRNA) and 33 different proteins (encoded by 57 genes). The large 60S subunit contains 3 rRNA molecules (25S, 5.8S and 5S rRNA) and 46 different proteins (encoded by 81 genes). In terms of processing, N-terminally acetylated by acetyltransferase NatA.

The protein localises to the cytoplasm. Functionally, component of the ribosome, a large ribonucleoprotein complex responsible for the synthesis of proteins in the cell. The small ribosomal subunit (SSU) binds messenger RNAs (mRNAs) and translates the encoded message by selecting cognate aminoacyl-transfer RNA (tRNA) molecules. The large subunit (LSU) contains the ribosomal catalytic site termed the peptidyl transferase center (PTC), which catalyzes the formation of peptide bonds, thereby polymerizing the amino acids delivered by tRNAs into a polypeptide chain. The nascent polypeptides leave the ribosome through a tunnel in the LSU and interact with protein factors that function in enzymatic processing, targeting, and the membrane insertion of nascent chains at the exit of the ribosomal tunnel. The polypeptide is Large ribosomal subunit protein eL6A (Saccharomyces cerevisiae (strain ATCC 204508 / S288c) (Baker's yeast)).